Reading from the N-terminus, the 375-residue chain is Ornithine carbamoyltransferase, chloroplastic (375 aa).

Carbamoyl phosphate is bound by residues 123 to 126 (SMRT), R174, H201, and Q204. 4 residues coordinate L-ornithine: N232, D293, S297, and M298. The active-site Proton acceptor is the C333. Carbamoyl phosphate contacts are provided by residues 333–334 (CL) and R361.

The protein belongs to the aspartate/ornithine carbamoyltransferase superfamily. OTCase family. Homotrimer.

It is found in the plastid. It localises to the chloroplast. It catalyses the reaction carbamoyl phosphate + L-ornithine = L-citrulline + phosphate + H(+). This is Ornithine carbamoyltransferase, chloroplastic (ARGF) from Pisum sativum (Garden pea).